The following is a 161-amino-acid chain: Phosphopantetheine adenylyltransferase (161 aa).

S9 contributes to the substrate binding site. ATP-binding positions include 9–10 (SF) and H17. Substrate-binding residues include K41, L73, and R87. ATP is bound by residues 88-90 (GLR), E98, and 123-129 (YTFISSS).

This sequence belongs to the bacterial CoaD family. Homohexamer. The cofactor is Mg(2+).

Its subcellular location is the cytoplasm. It catalyses the reaction (R)-4'-phosphopantetheine + ATP + H(+) = 3'-dephospho-CoA + diphosphate. It participates in cofactor biosynthesis; coenzyme A biosynthesis; CoA from (R)-pantothenate: step 4/5. In terms of biological role, reversibly transfers an adenylyl group from ATP to 4'-phosphopantetheine, yielding dephospho-CoA (dPCoA) and pyrophosphate. This is Phosphopantetheine adenylyltransferase from Syntrophomonas wolfei subsp. wolfei (strain DSM 2245B / Goettingen).